A 365-amino-acid chain; its full sequence is Class I histocompatibility antigen, Gogo-A*0101 alpha chain (365 aa).

Residues 1–24 (MAVMAPRTLVLLLSGALALTQTWA) form the signal peptide. An alpha-1 region spans residues 25 to 114 (GSHSMRYFST…LRGYYNQSED (90 aa)). Topologically, residues 25 to 308 (GSHSMRYFST…EPSSQPTIPI (284 aa)) are extracellular. An N-linked (GlcNAc...) asparagine glycan is attached at asparagine 110. The tract at residues 115 to 206 (GSHTIQRMYG…ENGKETLQRT (92 aa)) is alpha-2. Cystine bridges form between cysteine 125–cysteine 188 and cysteine 227–cysteine 283. Residues 207–298 (DAPKTHMTHH…GLPEPLTLRW (92 aa)) are alpha-3. Residues 209–297 (PKTHMTHHAV…EGLPEPLTLR (89 aa)) enclose the Ig-like C1-type domain. Residues 299-308 (EPSSQPTIPI) are connecting peptide. A helical transmembrane segment spans residues 309–332 (VGIIAGLVLFGAVIAGAVVAAVRW). Residues 333 to 365 (RRKSSDRKGGSYSQAASSDSAQGSDVSLTACKV) are Cytoplasmic-facing. Residues 338-365 (DRKGGSYSQAASSDSAQGSDVSLTACKV) form a disordered region. The span at 342 to 359 (GSYSQAASSDSAQGSDVS) shows a compositional bias: low complexity. Serine 343 bears the Phosphoserine mark. At tyrosine 344 the chain carries Phosphotyrosine. Serine 345, serine 349, serine 350, serine 352, serine 356, and serine 359 each carry phosphoserine.

This sequence belongs to the MHC class I family. As to quaternary structure, heterodimer of an alpha chain and a beta chain (beta-2-microglobulin).

It is found in the membrane. In terms of biological role, involved in the presentation of foreign antigens to the immune system. The sequence is that of Class I histocompatibility antigen, Gogo-A*0101 alpha chain from Gorilla gorilla gorilla (Western lowland gorilla).